Here is a 353-residue protein sequence, read N- to C-terminus: ATP-dependent kinase YFH7 (353 aa).

31 to 39 (GSPGSGKST) is an ATP binding site.

The protein belongs to the YFH7 family.

In terms of biological role, ATP-dependent kinase that could be involved in endoplasmic reticulum membrane assembly. This is ATP-dependent kinase YFH7 (YFH7) from Saccharomyces cerevisiae (strain Lalvin EC1118 / Prise de mousse) (Baker's yeast).